The sequence spans 1926 residues: Rho GTPase-activating protein 21-A (1926 aa).

A disordered region spans residues 1-41 (MATRRAIVPEQQQEPSSPASEISKNKDGQEQSEMVSPMEEE). Residues 10 to 22 (EQQQEPSSPASEI) are compositionally biased toward polar residues. Positions 77–162 (HTSIKDEENG…TLELSVMPKD (86 aa)) constitute a PDZ domain. Disordered stretches follow at residues 211-236 (VEVP…TTQP), 353-378 (PTAQ…QIDW), 416-487 (TDYN…RSES), 571-592 (QPTR…DRSG), 640-704 (FQRK…DSDA), and 868-905 (GKLG…DVFS). Polar residues-rich tracts occupy residues 216 to 236 (SGTS…TTQP), 353 to 372 (PTAQ…SPGP), and 416 to 429 (TDYN…FSGQ). Low complexity predominate over residues 441 to 451 (QQSVQMRQRSV). Basic and acidic residues predominate over residues 452–466 (SQERLEDPVLMKEWP). Over residues 468-479 (SASQDTLSSAVA) the composition is skewed to polar residues. Positions 640-669 (FQRKTQTESASGFQLDSVKTSMSASSSPPA) are enriched in polar residues. The PH domain maps to 906–1019 (DSNKEGFLYF…WIKAIQENGN (114 aa)). Polar residues predominate over residues 1044-1064 (MSSASNKSEQSPKAPRQTLSI). The disordered stretch occupies residues 1044–1107 (MSSASNKSEQ…SPPKDKGSWR (64 aa)). Over residues 1083 to 1105 (PKQESERRLFSKDDISPPKDKGS) the composition is skewed to basic and acidic residues. Residues 1126-1318 (VRLDDCPPAH…TLIQKHDWFF (193 aa)) form the Rho-GAP domain. Disordered stretches follow at residues 1330–1381 (VHEE…SGKD), 1396–1416 (ASRK…EDEL), 1512–1540 (QMEE…PKVV), 1573–1598 (LDPN…DERS), 1626–1658 (RQHR…TPRL), and 1827–1915 (STSE…LSGT). Residues 1512–1534 (QMEESMSDSGTMLSNSSQASAQR) are compositionally biased toward polar residues. Composition is skewed to polar residues over residues 1639-1653 (VQAN…TEGS) and 1866-1902 (TADI…NNFS).

It localises to the golgi apparatus membrane. The protein resides in the cell junction. It is found in the cytoplasmic vesicle membrane. Its subcellular location is the cytoplasm. The protein localises to the cytoskeleton. Its function is as follows. GTPase-activating protein (GAP) for rhoa and cdc42. This is Rho GTPase-activating protein 21-A (arhgap21-a) from Xenopus laevis (African clawed frog).